The following is a 732-amino-acid chain: Polyribonucleotide nucleotidyltransferase (732 aa).

Positions 503 and 509 each coordinate Mg(2+). The KH domain maps to 570–629 (PRLTSIQIPVDAIGLIIGKGGETIRSITEETGAEINIEDDGTVTIACSSPEGTNAAVETI). Residues 639–713 (GNTYLGKVRD…GKNRFALSIK (75 aa)) enclose the S1 motif domain. The disordered stretch occupies residues 710–732 (LSIKAVESEPEKSDENKAGTEGN). Positions 715–732 (VESEPEKSDENKAGTEGN) are enriched in basic and acidic residues.

The protein belongs to the polyribonucleotide nucleotidyltransferase family. Mg(2+) is required as a cofactor.

The protein resides in the cytoplasm. It carries out the reaction RNA(n+1) + phosphate = RNA(n) + a ribonucleoside 5'-diphosphate. Functionally, involved in mRNA degradation. Catalyzes the phosphorolysis of single-stranded polyribonucleotides processively in the 3'- to 5'-direction. In Chlorobium phaeobacteroides (strain DSM 266 / SMG 266 / 2430), this protein is Polyribonucleotide nucleotidyltransferase.